The following is a 314-amino-acid chain: Porphobilinogen deaminase (314 aa).

C249 is subject to S-(dipyrrolylmethanemethyl)cysteine.

It belongs to the HMBS family. Monomer. It depends on dipyrromethane as a cofactor.

The catalysed reaction is 4 porphobilinogen + H2O = hydroxymethylbilane + 4 NH4(+). Its pathway is porphyrin-containing compound metabolism; protoporphyrin-IX biosynthesis; coproporphyrinogen-III from 5-aminolevulinate: step 2/4. Tetrapolymerization of the monopyrrole PBG into the hydroxymethylbilane pre-uroporphyrinogen in several discrete steps. This Brucella suis biovar 1 (strain 1330) protein is Porphobilinogen deaminase.